The following is a 364-amino-acid chain: Homeobox protein Nkx-2.3 (364 aa).

The disordered stretch occupies residues 132–153 (GDCKAAEESERPKPRSRRKPRV). Basic and acidic residues predominate over residues 135 to 144 (KAAEESERPK). The homeobox DNA-binding region spans 148–207 (RRKPRVLFSQAQVFELERRFKQQRYLSAPEREHLASSLKLTSTQVKIWFQNRRYKCKRQR).

The protein belongs to the NK-2 homeobox family.

It localises to the nucleus. Functionally, transcription factor. This chain is Homeobox protein Nkx-2.3 (NKX2-3), found in Homo sapiens (Human).